The sequence spans 264 residues: Thiazole synthase (264 aa).

K106 serves as the catalytic Schiff-base intermediate with DXP. Residues G167, 193 to 194 (AG), and 215 to 216 (NT) contribute to the 1-deoxy-D-xylulose 5-phosphate site.

The protein belongs to the ThiG family. As to quaternary structure, homotetramer. Forms heterodimers with either ThiH or ThiS.

Its subcellular location is the cytoplasm. It catalyses the reaction [ThiS sulfur-carrier protein]-C-terminal-Gly-aminoethanethioate + 2-iminoacetate + 1-deoxy-D-xylulose 5-phosphate = [ThiS sulfur-carrier protein]-C-terminal Gly-Gly + 2-[(2R,5Z)-2-carboxy-4-methylthiazol-5(2H)-ylidene]ethyl phosphate + 2 H2O + H(+). It participates in cofactor biosynthesis; thiamine diphosphate biosynthesis. Catalyzes the rearrangement of 1-deoxy-D-xylulose 5-phosphate (DXP) to produce the thiazole phosphate moiety of thiamine. Sulfur is provided by the thiocarboxylate moiety of the carrier protein ThiS. In vitro, sulfur can be provided by H(2)S. This Xanthomonas axonopodis pv. citri (strain 306) protein is Thiazole synthase.